Reading from the N-terminus, the 362-residue chain is Ribosomal RNA large subunit methyltransferase F (362 aa).

Over residues 1–28 the composition is skewed to basic residues; it reads MNTPLKPKHGQKTNRKPKANKPVVKKQQ. Positions 1-40 are disordered; sequence MNTPLKPKHGQKTNRKPKANKPVVKKQQTKQPPTHKVQGE.

Belongs to the methyltransferase superfamily. METTL16/RlmF family.

It is found in the cytoplasm. The enzyme catalyses adenosine(1618) in 23S rRNA + S-adenosyl-L-methionine = N(6)-methyladenosine(1618) in 23S rRNA + S-adenosyl-L-homocysteine + H(+). Specifically methylates the adenine in position 1618 of 23S rRNA. The chain is Ribosomal RNA large subunit methyltransferase F from Vibrio cholerae serotype O1 (strain M66-2).